We begin with the raw amino-acid sequence, 456 residues long: Argininosuccinate lyase (456 aa).

It belongs to the lyase 1 family. Argininosuccinate lyase subfamily.

Its subcellular location is the cytoplasm. The catalysed reaction is 2-(N(omega)-L-arginino)succinate = fumarate + L-arginine. The protein operates within amino-acid biosynthesis; L-arginine biosynthesis; L-arginine from L-ornithine and carbamoyl phosphate: step 3/3. This chain is Argininosuccinate lyase, found in Listeria monocytogenes serovar 1/2a (strain ATCC BAA-679 / EGD-e).